The following is a 686-amino-acid chain: Eomesodermin homolog (686 aa).

Residues 27–46 (GGSGGSAGHLPSAAPSPQKL) form a disordered region. Residues 34 to 43 (GHLPSAAPSP) show a composition bias toward low complexity. Phosphoserine is present on Ser-107. Positions 276–456 (LWLKFHRHQT…HNPFAKGFRD (181 aa)) form a DNA-binding region, T-box. The tract at residues 571–686 (AMAGWGGRGS…GGYYAFYTTP (116 aa)) is required for transcription activation. The segment at 639–686 (ACKRRRLSPSNSSNENSPSIKCEDINAEEYSKDTSKGMGGYYAFYTTP) is disordered. Over residues 646–657 (SPSNSSNENSPS) the composition is skewed to low complexity. The segment covering 659–673 (KCEDINAEEYSKDTS) has biased composition (basic and acidic residues).

As to expression, expressed in CD8+ T-cells.

It is found in the nucleus. Functions as a transcriptional activator playing a crucial role during development. Functions in trophoblast differentiation and later in gastrulation, regulating both mesoderm delamination and endoderm specification. Plays a role in brain development being required for the specification and the proliferation of the intermediate progenitor cells and their progeny in the cerebral cortex. Required for differentiation and migration of unipolar dendritic brush cells. Also involved in the differentiation of CD8+ T-cells during immune response regulating the expression of lytic effector genes. This is Eomesodermin homolog (EOMES) from Homo sapiens (Human).